The primary structure comprises 217 residues: DNA helicase assembly protein (217 aa).

Belongs to the Tequatrovirus DNA helicase assembly protein family. In terms of assembly, monomer. Homohexamer; when associated with DNA. Interacts (via C-terminus) with the DnaB-like replicative helicase (via C-terminus); this interaction brings about the rapid assembly of the helicase onto ssDNA. Interacts (via C-terminus) with the single-stranded DNA-binding protein; a ternary complex between the helicase assembly protein, the single-stranded DNA-binding protein and ssDNA is an obligatory intermediate in the helicase loading mechanism. Interacts with the viral DNA polymerase. Binds to single and double-stranded DNA. Part of the replicase complex that includes the DNA polymerase, the polymerase clamp, the clamp loader complex, the single-stranded DNA binding protein (SSB), the primase, the DnaB-like replicative helicase and the helicase assembly factor.

Its function is as follows. DNA helicase loader protein that participates in viral DNA replication, recombination, and repair. At the fork, required for loading of the replicative helicase onto DNA protected by the ssDNA-binding protein. Coordinates simultaneous synthesis of leading- and lagging-strands. The chain is DNA helicase assembly protein from Enterobacteria phage T4 (Bacteriophage T4).